We begin with the raw amino-acid sequence, 229 residues long: Large ribosomal subunit protein uL1 (229 aa).

The protein belongs to the universal ribosomal protein uL1 family. As to quaternary structure, part of the 50S ribosomal subunit.

In terms of biological role, binds directly to 23S rRNA. The L1 stalk is quite mobile in the ribosome, and is involved in E site tRNA release. Its function is as follows. Protein L1 is also a translational repressor protein, it controls the translation of the L11 operon by binding to its mRNA. In Streptococcus uberis (strain ATCC BAA-854 / 0140J), this protein is Large ribosomal subunit protein uL1.